A 107-amino-acid chain; its full sequence is Phosphoribosyl-ATP pyrophosphatase (107 aa).

Belongs to the PRA-PH family.

The protein resides in the cytoplasm. It carries out the reaction 1-(5-phospho-beta-D-ribosyl)-ATP + H2O = 1-(5-phospho-beta-D-ribosyl)-5'-AMP + diphosphate + H(+). It functions in the pathway amino-acid biosynthesis; L-histidine biosynthesis; L-histidine from 5-phospho-alpha-D-ribose 1-diphosphate: step 2/9. This is Phosphoribosyl-ATP pyrophosphatase from Bacillus cereus (strain ATCC 14579 / DSM 31 / CCUG 7414 / JCM 2152 / NBRC 15305 / NCIMB 9373 / NCTC 2599 / NRRL B-3711).